We begin with the raw amino-acid sequence, 351 residues long: Uroporphyrinogen decarboxylase (351 aa).

Residues 25 to 29 (RQAGR), D74, Y151, S206, and H325 each bind substrate.

The protein belongs to the uroporphyrinogen decarboxylase family. As to quaternary structure, homodimer.

It is found in the cytoplasm. The catalysed reaction is uroporphyrinogen III + 4 H(+) = coproporphyrinogen III + 4 CO2. The protein operates within porphyrin-containing compound metabolism; protoporphyrin-IX biosynthesis; coproporphyrinogen-III from 5-aminolevulinate: step 4/4. Catalyzes the decarboxylation of four acetate groups of uroporphyrinogen-III to yield coproporphyrinogen-III. The chain is Uroporphyrinogen decarboxylase from Chlorobium chlorochromatii (strain CaD3).